A 502-amino-acid polypeptide reads, in one-letter code: Lipoyl synthase, apicoplast (502 aa).

Residues 1–16 (MNFLVLFFSYSIFVLP) form the signal peptide. Residues cysteine 192, cysteine 197, cysteine 203, cysteine 218, cysteine 222, cysteine 225, and serine 433 each coordinate [4Fe-4S] cluster. One can recognise a Radical SAM core domain in the interval 204–422 (WNIGTATIML…KDVGLKMGFK (219 aa)).

Belongs to the radical SAM superfamily. Lipoyl synthase family. [4Fe-4S] cluster serves as cofactor.

It is found in the plastid. The protein localises to the apicoplast. The enzyme catalyses [[Fe-S] cluster scaffold protein carrying a second [4Fe-4S](2+) cluster] + N(6)-octanoyl-L-lysyl-[protein] + 2 oxidized [2Fe-2S]-[ferredoxin] + 2 S-adenosyl-L-methionine + 4 H(+) = [[Fe-S] cluster scaffold protein] + N(6)-[(R)-dihydrolipoyl]-L-lysyl-[protein] + 4 Fe(3+) + 2 hydrogen sulfide + 2 5'-deoxyadenosine + 2 L-methionine + 2 reduced [2Fe-2S]-[ferredoxin]. It participates in protein modification; protein lipoylation via endogenous pathway; protein N(6)-(lipoyl)lysine from octanoyl-[acyl-carrier-protein]: step 2/2. In terms of biological role, catalyzes the radical-mediated insertion of two sulfur atoms into the C-6 and C-8 positions of the octanoyl moiety bound to the lipoyl domains of lipoate-dependent enzymes, thereby converting the octanoylated domains into lipoylated derivatives. This chain is Lipoyl synthase, apicoplast, found in Plasmodium yoelii yoelii.